A 338-amino-acid polypeptide reads, in one-letter code: Glycerol-3-phosphate dehydrogenase [NAD(P)+] (338 aa).

Residues Trp11, Arg30, and Lys109 each coordinate NADPH. 3 residues coordinate sn-glycerol 3-phosphate: Lys109, Gly143, and Ser145. Ala147 contacts NADPH. Sn-glycerol 3-phosphate contacts are provided by Lys198, Asp251, Ser261, Arg262, and Asn263. Residue Lys198 is the Proton acceptor of the active site. An NADPH-binding site is contributed by Arg262. NADPH contacts are provided by Val286 and Glu288.

Belongs to the NAD-dependent glycerol-3-phosphate dehydrogenase family.

It localises to the cytoplasm. It carries out the reaction sn-glycerol 3-phosphate + NAD(+) = dihydroxyacetone phosphate + NADH + H(+). The enzyme catalyses sn-glycerol 3-phosphate + NADP(+) = dihydroxyacetone phosphate + NADPH + H(+). The protein operates within membrane lipid metabolism; glycerophospholipid metabolism. Catalyzes the reduction of the glycolytic intermediate dihydroxyacetone phosphate (DHAP) to sn-glycerol 3-phosphate (G3P), the key precursor for phospholipid synthesis. This chain is Glycerol-3-phosphate dehydrogenase [NAD(P)+], found in Cupriavidus necator (strain ATCC 17699 / DSM 428 / KCTC 22496 / NCIMB 10442 / H16 / Stanier 337) (Ralstonia eutropha).